We begin with the raw amino-acid sequence, 177 residues long: Tumor necrosis factor ligand superfamily member 18 (177 aa).

Over 1–27 (MCLSHLENMPLSHSRTQGAQRSSWKLW) the chain is Cytoplasmic. The chain crosses the membrane as a helical; Signal-anchor for type II membrane protein span at residues 28 to 48 (LFCSIVMLLFLCSFSWLIFIF). The 124-residue stretch at 47–170 (IFLQLETAKE…NNTYWGIILL (124 aa)) folds into the THD domain. Residues 49-177 (LQLETAKEPC…ILLANPQFIS (129 aa)) are Extracellular-facing. Cys58 and Cys78 are joined by a disulfide. Asn129 and Asn161 each carry an N-linked (GlcNAc...) asparagine glycan.

Belongs to the tumor necrosis factor family. Homodimer. Homotrimer. Expressed at high levels in the small intestine, ovary, testis, kidney and endothelial cells.

Its subcellular location is the cell membrane. In terms of biological role, cytokine that binds to TNFRSF18/AITR/GITR. Regulates T-cell responses. Can function as costimulator and lower the threshold for T-cell activation and T-cell proliferation. Important for interactions between activated T-lymphocytes and endothelial cells. Mediates activation of NF-kappa-B. Triggers increased phosphorylation of STAT1 and up-regulates expression of VCAM1 and ICAM1. Promotes leukocyte adhesion to endothelial cells. Regulates migration of monocytes from the splenic reservoir to sites of inflammation. The chain is Tumor necrosis factor ligand superfamily member 18 from Homo sapiens (Human).